The primary structure comprises 375 residues: Alcohol dehydrogenase 1C (375 aa).

The residue at position 2 (serine 2) is an N-acetylserine. A Phosphoserine modification is found at serine 23. Zn(2+) is bound by residues cysteine 47, histidine 68, cysteine 98, cysteine 101, cysteine 104, cysteine 112, and cysteine 175. NAD(+)-binding positions include 200–205 (GLGGVG), aspartate 224, lysine 229, isoleucine 270, 293–295 (VGV), 318–320 (AIF), and arginine 370.

Belongs to the zinc-containing alcohol dehydrogenase family. In terms of assembly, dimer of identical or non-identical chains of class I alcohol dehydrogenase: ADH1A, ADH1B, and ADH1C. Zn(2+) is required as a cofactor. Expressed in kidney.

It localises to the cytoplasm. The catalysed reaction is a primary alcohol + NAD(+) = an aldehyde + NADH + H(+). It carries out the reaction ethanol + NAD(+) = acetaldehyde + NADH + H(+). In terms of biological role, alcohol dehydrogenase. Exhibits high activity for ethanol oxidation and plays a major role in ethanol catabolism. This chain is Alcohol dehydrogenase 1C (ADH1C), found in Papio hamadryas (Hamadryas baboon).